The following is a 122-amino-acid chain: Ribosome-binding factor A (122 aa).

This sequence belongs to the RbfA family. As to quaternary structure, monomer. Binds 30S ribosomal subunits, but not 50S ribosomal subunits or 70S ribosomes.

It is found in the cytoplasm. In terms of biological role, one of several proteins that assist in the late maturation steps of the functional core of the 30S ribosomal subunit. Associates with free 30S ribosomal subunits (but not with 30S subunits that are part of 70S ribosomes or polysomes). Required for efficient processing of 16S rRNA. May interact with the 5'-terminal helix region of 16S rRNA. This chain is Ribosome-binding factor A, found in Burkholderia thailandensis (strain ATCC 700388 / DSM 13276 / CCUG 48851 / CIP 106301 / E264).